The sequence spans 79 residues: UPF0154 protein lwe1321 (79 aa).

A helical transmembrane segment spans residues 2 to 22; the sequence is WIYILVGIICLLAGLAGGFFI. A compositionally biased stretch (polar residues) spans 57–66; that stretch reads KINQMMSAMN. The segment at 57–79 is disordered; it reads KINQMMSAMNKQQEKEKPKKAKK.

The protein belongs to the UPF0154 family.

Its subcellular location is the cell membrane. The polypeptide is UPF0154 protein lwe1321 (Listeria welshimeri serovar 6b (strain ATCC 35897 / DSM 20650 / CCUG 15529 / CIP 8149 / NCTC 11857 / SLCC 5334 / V8)).